A 62-amino-acid polypeptide reads, in one-letter code: Negative regulatory protein YxlE (62 aa).

2 helical membrane-spanning segments follow: residues 7-27 (MILPLIVLQLALAVFALISCI) and 37-57 (WMWAAIIVCINIIGPILFFTV).

The protein resides in the cell membrane. Together with YxlD is important for negative regulation of sigma Y activity. The polypeptide is Negative regulatory protein YxlE (yxlE) (Bacillus subtilis (strain 168)).